We begin with the raw amino-acid sequence, 177 residues long: Large ribosomal subunit protein uL6 (177 aa).

It belongs to the universal ribosomal protein uL6 family. In terms of assembly, part of the 50S ribosomal subunit.

Its function is as follows. This protein binds to the 23S rRNA, and is important in its secondary structure. It is located near the subunit interface in the base of the L7/L12 stalk, and near the tRNA binding site of the peptidyltransferase center. The chain is Large ribosomal subunit protein uL6 from Sinorhizobium medicae (strain WSM419) (Ensifer medicae).